The sequence spans 437 residues: Beta-1,3-galactosyl-O-glycosyl-glycoprotein beta-1,6-N-acetylglucosaminyltransferase 3 (437 aa).

At 1–6 the chain is on the cytoplasmic side; that stretch reads MVSWRR. A helical; Signal-anchor for type II membrane protein membrane pass occupies residues 7–27; that stretch reads FCWHYHGWTLGCYMLLAIIAL. Topologically, residues 28–437 are lumenal; it reads KLSLRLKCDF…RHKAIYGTEL (410 aa). 4 disulfide bridges follow: C70–C227, C161–C381, C182–C209, and C390–C422. A glycan (N-linked (GlcNAc...) asparagine) is linked at N288.

The protein belongs to the glycosyltransferase 14 family. In terms of processing, N-glycosylated.

Its subcellular location is the golgi apparatus membrane. It carries out the reaction a 3-O-[beta-D-galactosyl-(1-&gt;3)-N-acetyl-alpha-D-galactosaminyl]-L-seryl-[protein] + UDP-N-acetyl-alpha-D-glucosamine = 3-O-{beta-D-galactosyl-(1-&gt;3)-[N-acetyl-beta-D-glucosaminyl-(1-&gt;6)]-N-acetyl-alpha-D-galactosaminyl}-L-seryl-[protein] + UDP + H(+). It catalyses the reaction a 3-O-[beta-D-galactosyl-(1-&gt;3)-N-acetyl-alpha-D-galactosaminyl]-L-threonyl-[protein] + UDP-N-acetyl-alpha-D-glucosamine = a 3-O-{beta-D-galactosyl-(1-&gt;3)-[N-acetyl-beta-D-glucosaminyl-(1-&gt;6)]-N-acetyl-alpha-D-galactosaminyl}-L-threonyl-[protein] + UDP + H(+). The catalysed reaction is a beta-D-Gal-(1-&gt;4)-beta-D-GlcNAc-(1-&gt;3)-beta-D-Gal-(1-&gt;4)-beta-D-GlcNAc derivative + UDP-N-acetyl-alpha-D-glucosamine = a beta-D-Gal-(1-&gt;4)-beta-D-GlcNAc-(1-&gt;3)-[beta-D-GlcNAc-(1-&gt;6)]-beta-D-Gal-(1-&gt;4)-N-acetyl-beta-D-glucosaminyl derivative + UDP + H(+). The enzyme catalyses 3-O-[N-acetyl-beta-D-glucosaminyl-(1-&gt;3)-N-acetyl-alpha-D-galactosaminyl]-L-seryl-[protein] + UDP-N-acetyl-alpha-D-glucosamine = 3-O-[N-acetyl-beta-D-glucosaminyl-(1-&gt;3)-[N-acetyl-beta-D-glucosaminyl-(1-&gt;6)]-N-acetyl-alpha-D-galactosaminyl]-L-seryl-[protein] + UDP + H(+). It carries out the reaction a 3-O-[N-acetyl-beta-D-glucosaminyl-(1-&gt;3)-N-acetyl-alpha-D-galactosaminyl]-L-threonyl-[protein] + UDP-N-acetyl-alpha-D-glucosamine = 3-O-[N-acetyl-beta-D-glucosaminyl-(1-&gt;3)-[N-acetyl-beta-D-glucosaminyl-(1-&gt;6)]-N-acetyl-alpha-D-galactosaminyl]-L-threonyl-[protein] + UDP + H(+). It participates in protein modification; protein glycosylation. In terms of biological role, glycosyltransferase that can synthesize all known mucin beta 6 N-acetylglucosaminides. Mediates core 2 and core 4 O-glycan branching, 2 important steps in mucin-type biosynthesis. Also has I-branching enzyme activity by converting linear into branched poly-N-acetyllactosaminoglycans, leading to introduce the blood group I antigen during embryonic development. The sequence is that of Beta-1,3-galactosyl-O-glycosyl-glycoprotein beta-1,6-N-acetylglucosaminyltransferase 3 (Gcnt3) from Rattus norvegicus (Rat).